The chain runs to 584 residues: Aspartate--tRNA(Asp/Asn) ligase (584 aa).

E174 is an L-aspartate binding site. Positions 198 to 201 (QLFK) are aspartate. Residue R220 participates in L-aspartate binding. ATP-binding positions include 220–222 (RDE) and Q229. Residue H447 coordinates L-aspartate. Position 480 (E480) interacts with ATP. R487 serves as a coordination point for L-aspartate. 532 to 535 (GFDR) contributes to the ATP binding site.

The protein belongs to the class-II aminoacyl-tRNA synthetase family. Type 1 subfamily. As to quaternary structure, homodimer.

It is found in the cytoplasm. It catalyses the reaction tRNA(Asx) + L-aspartate + ATP = L-aspartyl-tRNA(Asx) + AMP + diphosphate. Its function is as follows. Aspartyl-tRNA synthetase with relaxed tRNA specificity since it is able to aspartylate not only its cognate tRNA(Asp) but also tRNA(Asn). Reaction proceeds in two steps: L-aspartate is first activated by ATP to form Asp-AMP and then transferred to the acceptor end of tRNA(Asp/Asn). This Endomicrobium trichonymphae protein is Aspartate--tRNA(Asp/Asn) ligase.